A 234-amino-acid polypeptide reads, in one-letter code: Glucosamine-6-phosphate deaminase (234 aa).

Asp-63 functions as the Proton acceptor; for enolization step in the catalytic mechanism. Asn-129 serves as the catalytic For ring-opening step. His-131 (proton acceptor; for ring-opening step) is an active-site residue. Glu-136 functions as the For ring-opening step in the catalytic mechanism.

This sequence belongs to the glucosamine/galactosamine-6-phosphate isomerase family. NagB subfamily.

The enzyme catalyses alpha-D-glucosamine 6-phosphate + H2O = beta-D-fructose 6-phosphate + NH4(+). It participates in amino-sugar metabolism; N-acetylneuraminate degradation; D-fructose 6-phosphate from N-acetylneuraminate: step 5/5. Catalyzes the reversible isomerization-deamination of glucosamine 6-phosphate (GlcN6P) to form fructose 6-phosphate (Fru6P) and ammonium ion. The protein is Glucosamine-6-phosphate deaminase of Listeria monocytogenes serotype 4b (strain CLIP80459).